The following is a 267-amino-acid chain: Non-homologous end joining protein Ku (267 aa).

One can recognise a Ku domain in the interval 10–190 (ISFGLVSFPV…TKYTAKELEL (181 aa)).

The protein belongs to the prokaryotic Ku family. As to quaternary structure, homodimer. Interacts with LigD.

In terms of biological role, with LigD forms a non-homologous end joining (NHEJ) DNA repair enzyme, which repairs dsDNA breaks with reduced fidelity. Binds linear dsDNA with 5'- and 3'- overhangs but not closed circular dsDNA nor ssDNA. Recruits and stimulates the ligase activity of LigD. This is Non-homologous end joining protein Ku from Solibacter usitatus (strain Ellin6076).